The primary structure comprises 394 residues: MSSLSRFLLRGNFSFSTHTNRRFFSAVTAAAATPSPPKPSLITLVNDERDPKFITEKFKKACQAEWFRKNIAVYERTVRRLAAAKKFEWVEEILEEQNKYPNMSKEGFVARIINLYGRVGMFENAQKVFDEMPERNCKRTALSFNALLNACVNSKKFDLVEGIFKELPGKLSIEPDVASYNTLIKGLCGKGSFTEAVALIDEIENKGLKPDHITFNILLHESYTKGKFEEGEQIWARMVEKNVKRDIRSYNARLLGLAMENKSEEMVSLFDKLKGNELKPDVFTFTAMIKGFVSEGKLDEAITWYKEIEKNGCRPLKFVFNSLLPAICKAGDLESAYELCKEIFAKRLLVDEAVLQEVVDALVKGSKQDEAEEIVELAKTNDYLQCKLRLFPKE.

A mitochondrion-targeting transit peptide spans 1–24; sequence MSSLSRFLLRGNFSFSTHTNRRFF. PPR repeat units follow at residues 105–139, 140–170, 176–210, 211–245, 246–280, 281–315, 316–350, and 351–385; these read KEGF…NCKR, TALS…LPGK, DVAS…GLKP, DHIT…NVKR, DIRS…ELKP, DVFT…GCRP, LKFV…RLLV, and DEAV…DYLQ.

Belongs to the PPR family. P subfamily. As to quaternary structure, component of the mitochondrial ribosome small subunit.

Its subcellular location is the mitochondrion. The protein is Small ribosomal subunit protein mS79 (rPPR3b) of Arabidopsis thaliana (Mouse-ear cress).